Reading from the N-terminus, the 143-residue chain is Large ribosomal subunit protein uL11 (143 aa).

This sequence belongs to the universal ribosomal protein uL11 family. As to quaternary structure, part of the ribosomal stalk of the 50S ribosomal subunit. Interacts with L10 and the large rRNA to form the base of the stalk. L10 forms an elongated spine to which L12 dimers bind in a sequential fashion forming a multimeric L10(L12)X complex. In terms of processing, one or more lysine residues are methylated.

Functionally, forms part of the ribosomal stalk which helps the ribosome interact with GTP-bound translation factors. This Janthinobacterium sp. (strain Marseille) (Minibacterium massiliensis) protein is Large ribosomal subunit protein uL11.